A 507-amino-acid polypeptide reads, in one-letter code: MEEFQRYIELDRSWQHNFFYPLIFQEYIYGFAYDHGLNKSILLENAGDKKYSLLIVKRLINRMYQQTHLIISANHSNQNDFFGHKHKKNLYYQIISEGFAVIVEIPFSLLLISSLEAKEKKIVKSHNLRSIHSIFPFFEDKFLHLNYVLEILIPYPIHLEILVQTLRYWVKDASSLHLLRFFLYEYRNWNSLITPQKSISIFSNQRLFLFLYNFYVCEYESIFVFLCNQSSHLRSTSFGALLERNYFYGKLEYLVKVKTNTKDFCVILWLFKDPFLHYVRYRGKSILASKGTSLLMHKWKYYLFNFWQCHFSLWSPPRRIYINRLSKHSLDFMGFFSSVRLNSSVVRSQMVENSFLIDNPIKKFDTIVRIIPLVGSLAKAKFCNVLGHPISKSVWTDLLDSDIIDRFGRICRNLSHYYSGSSRKKSLYRIKYILRLSCARTLARKHKSTVRAFLKRLGSEFLEEFFTEEEKVLSLILPRDSSISRGLYRGPFWYLDIICIHDLANDE.

This sequence belongs to the intron maturase 2 family. MatK subfamily.

The protein resides in the plastid. The protein localises to the chloroplast. Usually encoded in the trnK tRNA gene intron. Probably assists in splicing its own and other chloroplast group II introns. The sequence is that of Maturase K from Browningia hertlingiana (Cactus).